The sequence spans 393 residues: Pyrimidine monooxygenase RutA (393 aa).

FMN contacts are provided by residues 79 to 80 (IK), asparagine 145, glutamate 154, 170 to 171 (RY), and serine 220.

The protein belongs to the NtaA/SnaA/DszA monooxygenase family. RutA subfamily.

It catalyses the reaction uracil + FMNH2 + NADH + O2 = (Z)-3-ureidoacrylate + FMN + NAD(+) + H2O + H(+). It carries out the reaction thymine + FMNH2 + NADH + O2 = (Z)-2-methylureidoacrylate + FMN + NAD(+) + H2O + H(+). Its function is as follows. Catalyzes the pyrimidine ring opening between N-3 and C-4 by an unusual flavin hydroperoxide-catalyzed mechanism, adding oxygen atoms in the process to yield ureidoacrylate peracid, that immediately reacts with FMN forming ureidoacrylate and FMN-N(5)-oxide. The FMN-N(5)-oxide reacts spontaneously with NADH to produce FMN. Requires the flavin reductase RutF to regenerate FMN in vivo. This is Pyrimidine monooxygenase RutA from Escherichia coli O139:H28 (strain E24377A / ETEC).